The sequence spans 262 residues: MLIFDSGVGGLSILKNIKKILPNIHYIYMLDNESFPYGNKTEFFIIQRSIKIIHTIKKIYPINIVVIACNTISTVALSILREKFDIPIFGIFPHIKAAEKITKNKIIGLIATKATINSSYTQKTIYEYSCSNTIKIIGTNKLAVIAEKKIRGVAVSQKKLKNIFRPWINLPTCPDTIILGCTHFSLLEKEIKNILYKTRSVYFIDSIKKVIFQIKSYLKTSNVNQKIKKNIFLYSKNNNNLKKLLSFLKQYKFTVIKHINLN.

Substrate contacts are provided by residues 5–6 (DS) and 37–38 (YG). Catalysis depends on cysteine 69, which acts as the Proton donor/acceptor. Residue 70 to 71 (NT) coordinates substrate. Residue cysteine 181 is the Proton donor/acceptor of the active site. 182–183 (TH) is a substrate binding site.

It belongs to the aspartate/glutamate racemases family.

The catalysed reaction is L-glutamate = D-glutamate. It participates in cell wall biogenesis; peptidoglycan biosynthesis. Provides the (R)-glutamate required for cell wall biosynthesis. The polypeptide is Glutamate racemase (Buchnera aphidicola subsp. Acyrthosiphon pisum (strain 5A)).